Here is a 147-residue protein sequence, read N- to C-terminus: Large ribosomal subunit protein uL11 (147 aa).

It belongs to the universal ribosomal protein uL11 family. In terms of assembly, part of the ribosomal stalk of the 50S ribosomal subunit. Interacts with L10 and the large rRNA to form the base of the stalk. L10 forms an elongated spine to which L12 dimers bind in a sequential fashion forming a multimeric L10(L12)X complex. In terms of processing, one or more lysine residues are methylated.

Functionally, forms part of the ribosomal stalk which helps the ribosome interact with GTP-bound translation factors. This chain is Large ribosomal subunit protein uL11, found in Thermus thermophilus (strain ATCC BAA-163 / DSM 7039 / HB27).